The sequence spans 35 residues: Cecropin-A (35 aa).

Position 35 is a leucine amide (Leu35).

Monomer. Hemolymph.

Its subcellular location is the secreted. Functionally, cecropins have lytic and antibacterial activity against several Gram-positive and Gram-negative bacteria. Also has activity against fungi. The chain is Cecropin-A from Heliothis virescens (Tobacco budworm moth).